Reading from the N-terminus, the 107-residue chain is YcgL domain-containing protein Pcryo_0807 (107 aa).

The 95-residue stretch at 1–95 (MHCDIYKFLK…QDVMRRQAEL (95 aa)) folds into the YcgL domain.

This Psychrobacter cryohalolentis (strain ATCC BAA-1226 / DSM 17306 / VKM B-2378 / K5) protein is YcgL domain-containing protein Pcryo_0807.